An 88-amino-acid polypeptide reads, in one-letter code: Insulin-related peptide 4 (88 aa).

Residues 1–19 (MKLTLIILLVVAYSWCSEA) form the signal peptide. The propeptide occupies 20–45 (QNEARVFCGRVLSERLAALCWGPNSV). Residue Arg65 is modified to Arginine amide. A propeptide spanning residues 69 to 88 (GLATECCDKACTVEELLSYC) is cleaved from the precursor.

Belongs to the insulin family. DAGWWLTRGAARSLGGVR-amide: Expressed in corpora cardiaca (CC), corpora allata (CA), antennal lobe (AL) and gnathal ganglion (GNG) (at protein level). Expression in CC and CA detected in most animals, in AL and GNG in few animals (at protein level).

Its subcellular location is the secreted. The sequence is that of Insulin-related peptide 4 from Agrotis ipsilon (Black cutworm moth).